We begin with the raw amino-acid sequence, 304 residues long: Beta-lactamase-like protein str6 (304 aa).

This sequence belongs to the beta-lactamase family.

It functions in the pathway mycotoxin biosynthesis. Functionally, beta-lactamase-like protein; part of the gene cluster that mediates the biosynthesis of strobilurin A, an antifungal polyketide that contains a key beta-methoxyacrylate toxophore that targets the complex III of the mitochondrial electron transport chain. Strobilurin biosynthesis begins with construction of benzoyl CoA by step-wise elimination of ammonia from phenylalanine by the phenylalanine ammonia-lyase str11, oxygenation by str8 and retro-Claisen reaction to form benzoic acid, which is activated to its CoA thiolester benzoyl CoA by the dedicated CoA ligase str10. Benzoyl CoA forms the starter unit for the highly reducing polyketide synthase stpks1 that produces the polyketide prestrobilutin A. The FAD-dependent oxygenase str9 then catalyzes the key oxidative rearrangement responsible for the creation of the beta-methoxyacrylate toxophore. Str9 performs epoxidation of the 2,3 olefin of prestrobilutin A, followed by Meinwald rearrangement to furnish the aldehyde intermediate. Rapid enolization of the aldehyde intermediate would give the beta-methoxyacrylate skeleton and methylations catalyzed by str2 and str3 complete the synthesis and lead to the production of strobilurin A. The short-chain dehydrogenase stl2 and the dehydrogenase str4 play a role in the shunt pathway leading to the production of bolineol. The cluster encodes no obvious halogenase gene that could be involved in production of strobilurin B, nor any obvious dimethylallyl-transferase that could be involved in the production of strobilurin G. It is possible that unknown proteins encoded in, or near, the cluster (such as str1 or stl1) may form new classes of halogenases or dimethylally-transferases, or that the responsible genes are located elsewhere on the genome. Similarly, proteins encoded by str5/str6 hydrolases appear to have no chemical role in the biosynthesis of strobilurin A. Finally, no obvious self-resistance gene is found within the cluster. This Strobilurus tenacellus protein is Beta-lactamase-like protein str6.